A 273-amino-acid polypeptide reads, in one-letter code: Ribosomal RNA small subunit methyltransferase A (273 aa).

Positions 18, 20, 45, 66, 91, and 113 each coordinate S-adenosyl-L-methionine.

The protein belongs to the class I-like SAM-binding methyltransferase superfamily. rRNA adenine N(6)-methyltransferase family. RsmA subfamily.

The protein localises to the cytoplasm. The enzyme catalyses adenosine(1518)/adenosine(1519) in 16S rRNA + 4 S-adenosyl-L-methionine = N(6)-dimethyladenosine(1518)/N(6)-dimethyladenosine(1519) in 16S rRNA + 4 S-adenosyl-L-homocysteine + 4 H(+). Specifically dimethylates two adjacent adenosines (A1518 and A1519) in the loop of a conserved hairpin near the 3'-end of 16S rRNA in the 30S particle. May play a critical role in biogenesis of 30S subunits. This chain is Ribosomal RNA small subunit methyltransferase A, found in Klebsiella pneumoniae (strain 342).